We begin with the raw amino-acid sequence, 1446 residues long: Major viral transcription factor ICP4 homolog (1446 aa).

Disordered regions lie at residues 25-59, 73-493, 801-987, and 1385-1446; these read AEEEGIASGPDGGSQGSRRRGSSGEDLLFGPGGLF, AAAG…PPAD, PGPA…HTPR, and THRP…LLLR. Over residues 73-94 the composition is skewed to low complexity; it reads AAAGATRPPRPPSAQQQQQPRR. Acidic residues predominate over residues 101 to 112; it reads VLDDEDEEEDEP. Composition is skewed to low complexity over residues 166–189 and 216–241; these read RSSPSAASPASSSGSPGPSAAPRR and PAAVAAAPARRGPASPASPAAGPVSA. The span at 262 to 277 shows a compositional bias: basic and acidic residues; the sequence is REPLLDEPAAARRLDP. Composition is skewed to low complexity over residues 284–306 and 345–397; these read SPVSSNPNSNSNSTTTVAVETVA and GFSS…SSSS. Residues 415–426 are compositionally biased toward pro residues; the sequence is GPPPSPPAPAAA. Low complexity predominate over residues 427–442; the sequence is PRPSASSASSSAAASP. Residues 803–815 show a composition bias toward pro residues; the sequence is PAEPAPGLPPLWP. Over residues 827 to 877 the composition is skewed to low complexity; sequence PAAAGAPSGLPGSGPSSPASTKSSSSTKSSSSTKSGLSGSSGYASSPAAGP. The segment covering 883–892 has biased composition (basic residues); it reads RRKKKRRAPG. Over residues 933-952 the composition is skewed to low complexity; the sequence is LGLGPAPDPAPALLSSSSSS.

Belongs to the herpesviridae ICP4 family. Post-translationally, a long stretch of serine residues may be a major site of phosphorylation.

It localises to the host nucleus. Functionally, this IE protein is a multifunctional protein capable of migrating to the nucleus, binding to DNA, trans-activating other viral genes, and autoregulating its own synthesis. The sequence is that of Major viral transcription factor ICP4 homolog (IE) from Suid herpesvirus 1 (strain Kaplan) (SuHV-1).